The following is a 352-amino-acid chain: Glycerol-1-phosphate dehydrogenase [NAD(P)+] (352 aa).

NAD(+)-binding positions include G98–D102 and T120–S123. Residue D125 coordinates substrate. S129 contributes to the NAD(+) binding site. D172 provides a ligand contact to substrate. Zn(2+)-binding residues include D172 and H252. H256 contributes to the substrate binding site. A Zn(2+)-binding site is contributed by H268.

Belongs to the glycerol-1-phosphate dehydrogenase family. Zn(2+) serves as cofactor.

The protein localises to the cytoplasm. It carries out the reaction sn-glycerol 1-phosphate + NAD(+) = dihydroxyacetone phosphate + NADH + H(+). The catalysed reaction is sn-glycerol 1-phosphate + NADP(+) = dihydroxyacetone phosphate + NADPH + H(+). Its pathway is membrane lipid metabolism; glycerophospholipid metabolism. Catalyzes the NAD(P)H-dependent reduction of dihydroxyacetonephosphate (DHAP or glycerone phosphate) to glycerol 1-phosphate (G1P). The G1P thus generated is used as the glycerophosphate backbone of phospholipids in the cellular membranes of Archaea. The sequence is that of Glycerol-1-phosphate dehydrogenase [NAD(P)+] from Halobacterium salinarum (strain ATCC 29341 / DSM 671 / R1).